Reading from the N-terminus, the 89-residue chain is MAKESMKAREVKRQKLVKKYAEKRAALKEAGDYEGLQKLPKNSSPVRLHNRCKLTGRPKGYMRQFGLSRVMFREMANQGLIPGVKKASW.

The segment at 32–51 (DYEGLQKLPKNSSPVRLHNR) is disordered.

It belongs to the universal ribosomal protein uS14 family. In terms of assembly, part of the 30S ribosomal subunit. Contacts proteins S3 and S10.

Binds 16S rRNA, required for the assembly of 30S particles and may also be responsible for determining the conformation of the 16S rRNA at the A site. The sequence is that of Small ribosomal subunit protein uS14 from Christiangramia forsetii (strain DSM 17595 / CGMCC 1.15422 / KT0803) (Gramella forsetii).